A 440-amino-acid polypeptide reads, in one-letter code: Probable exopolygalacturonase C (440 aa).

Residues 1–19 (MSVFKASFLFLLSSSLVHG) form the signal peptide. 2 N-linked (GlcNAc...) asparagine glycosylation sites follow: N82 and N99. PbH1 repeat units lie at residues 215-236 (GTNI…AVGA), 238-259 (SHDT…SIGS), and 265-288 (TDFA…YAAR). The active-site Proton donor is D229. The active site involves H253. Residues N269, N301, N311, and N334 are each glycosylated (N-linked (GlcNAc...) asparagine). C387 and C393 are disulfide-bonded. N-linked (GlcNAc...) asparagine glycosylation is found at N417 and N432.

This sequence belongs to the glycosyl hydrolase 28 family.

The protein localises to the secreted. It catalyses the reaction [(1-&gt;4)-alpha-D-galacturonosyl](n) + H2O = alpha-D-galacturonate + [(1-&gt;4)-alpha-D-galacturonosyl](n-1). Its function is as follows. Specific in hydrolyzing the terminal glycosidic bond of polygalacturonic acid and oligogalacturonates. The polypeptide is Probable exopolygalacturonase C (pgxC) (Aspergillus niger (strain ATCC MYA-4892 / CBS 513.88 / FGSC A1513)).